Consider the following 294-residue polypeptide: ATP synthase gamma chain (294 aa).

This sequence belongs to the ATPase gamma chain family. F-type ATPases have 2 components, CF(1) - the catalytic core - and CF(0) - the membrane proton channel. CF(1) has five subunits: alpha(3), beta(3), gamma(1), delta(1), epsilon(1). CF(0) has three main subunits: a, b and c.

The protein localises to the cell inner membrane. Functionally, produces ATP from ADP in the presence of a proton gradient across the membrane. The gamma chain is believed to be important in regulating ATPase activity and the flow of protons through the CF(0) complex. In Campylobacter jejuni subsp. jejuni serotype O:6 (strain 81116 / NCTC 11828), this protein is ATP synthase gamma chain.